The primary structure comprises 600 residues: MCGIVGFIGEQDAKEILLKGLEKLEYRGYDSAGIAVQAENGVVVYKEKGRIAKLREIVDENVATSVGIGHTRWATHGVPSKVNAHPHQSTSKRFTLVHNGVIENYELVKKEYLQDVTFVSETDTEVIVQLMEQQVSTGLSVEEAFRNTLSLLHGSYAIGLLDAENPNMIYVAKNKSPLLVGVGDNFNVVASDAMAMLQVTDQFIELMDKEIVIVTKESITIKNLQGETIERAPFTAELDASDIEKGTYPHFMLKEIDEQPLVIRNIIQKYQDENGEIELDQDIRNAILDSDRIYIIACGTSYHAGLVGKQFIEKFAKMPVEVHVASEFSYNMPLLTERPFFIYISQSGETADSRAVLVQTNEMGHKALTITNVPGSTLSREADYTLPLYAGPEIAVASTKAYTAQLAVLSILAADIAKAKGEVLGFDLTHELGLVANAMVQLCDQKEEMDALAKQFLATTRNCFFIGRSVDFYVGLEGALKLKEISYIQAEGFAGGELKHGTIALIENGTPVIALATQEHVNLGIRGNVKEVVARGANPCIISMKGLEMEGDSFVLPAVHEALAPLVAVIPLQLISYYAALHRECDVDKPRNLAKSVTVE.

The Nucleophile; for GATase activity role is filled by C2. Positions 2–217 (CGIVGFIGEQ…DKEIVIVTKE (216 aa)) constitute a Glutamine amidotransferase type-2 domain. 2 SIS domains span residues 283–422 (IRNA…AKGE) and 452–590 (LAKQ…VDKP). K595 (for Fru-6P isomerization activity) is an active-site residue.

Homodimer.

Its subcellular location is the cytoplasm. It catalyses the reaction D-fructose 6-phosphate + L-glutamine = D-glucosamine 6-phosphate + L-glutamate. Its function is as follows. Catalyzes the first step in hexosamine metabolism, converting fructose-6P into glucosamine-6P using glutamine as a nitrogen source. The protein is Glutamine--fructose-6-phosphate aminotransferase [isomerizing] of Bacillus cereus (strain ATCC 10987 / NRS 248).